The chain runs to 308 residues: Hydroxyacylglutathione hydrolase, mitochondrial (308 aa).

The transit peptide at 1–13 directs the protein to the mitochondrion; that stretch reads MVVGRGLLGRRSL. Zn(2+) contacts are provided by histidine 102, histidine 104, aspartate 106, and histidine 107. Lysine 116 is modified (N6-acetyllysine). Residues histidine 158 and aspartate 182 each coordinate Zn(2+). Residues 191–193 and 221–223 contribute to the substrate site; these read KFY and HEY. Histidine 221 serves as a coordination point for Zn(2+). N6-acetyllysine; alternate is present on lysine 229. Lysine 229 carries the post-translational modification N6-succinyllysine; alternate. Substrate is bound at residue 297–300; the sequence is RREK.

Belongs to the metallo-beta-lactamase superfamily. Glyoxalase II family. Monomer. Requires Zn(2+) as cofactor. Expressed in liver and kidney.

The protein localises to the mitochondrion matrix. The protein resides in the cytoplasm. It catalyses the reaction an S-(2-hydroxyacyl)glutathione + H2O = a 2-hydroxy carboxylate + glutathione + H(+). The catalysed reaction is (R)-S-lactoylglutathione + H2O = (R)-lactate + glutathione + H(+). It participates in secondary metabolite metabolism; methylglyoxal degradation; (R)-lactate from methylglyoxal: step 2/2. Functionally, thiolesterase that catalyzes the hydrolysis of S-D-lactoyl-glutathione to form glutathione and D-lactic acid. The sequence is that of Hydroxyacylglutathione hydrolase, mitochondrial (HAGH) from Homo sapiens (Human).